Here is a 2022-residue protein sequence, read N- to C-terminus: Transient receptor potential cation channel subfamily M member 6 (2022 aa).

Over 1-741 (MKEQPVLERL…MWMGRLKMRK (741 aa)) the chain is Cytoplasmic. A helical membrane pass occupies residues 742–762 (NSWLKIIISIILPPTILTLEF). The Extracellular segment spans residues 763 to 841 (KSKAEMSHVP…YEFYSAPIVK (79 aa)). The chain crosses the membrane as a helical span at residues 842–862 (FWFYTMAYLAFLMLFTYTVLV). Topologically, residues 863 to 905 (EMQPQPSVQEWLVSIYIFTNAIEVVREICISEPGKFTQKVKVW) are cytoplasmic. A helical transmembrane segment spans residues 906-926 (ISEYWNLTETVAIGLFSAGFV). Residues 927–939 (LRWGDPPFHTAGR) lie on the Extracellular side of the membrane. A helical transmembrane segment spans residues 940 to 960 (LIYCIDIIFWFSRLLDFFAVN). Residues 961–972 (QHAGPYVTMIAK) lie on the Cytoplasmic side of the membrane. Residues 973–993 (MTANMFYIVIIMAIVLLSFGV) form a helical membrane-spanning segment. Topologically, residues 994-1012 (ARKAILSPKEPPSWSLARD) are extracellular. Positions 1013–1033 (IVFEPYWMIYGEVYAGEIDVC) form an intramembrane region, pore-forming. Residues 1034–1047 (SSQPSCPPGSFLTP) are Extracellular-facing. Residues 1048 to 1068 (FLQAVYLFVQYIIMVNLLIAF) form a helical membrane-spanning segment. Residues 1069-2022 (FNNVYLDMES…RNSPEDDMQL (954 aa)) lie on the Cytoplasmic side of the membrane. Positions 1479-1516 (TCDSDSSRSEQHQKQAQDSSLSDNSTRSAQSSECSEVG) are disordered. A compositionally biased stretch (basic and acidic residues) spans 1483 to 1493 (DSSRSEQHQKQ). Residues 1494–1512 (AQDSSLSDNSTRSAQSSEC) are compositionally biased toward polar residues. One can recognise an Alpha-type protein kinase domain in the interval 1750–1980 (NLDKSMSSWS…CCRKLKLPDL (231 aa)). The ADP site is built by Gly-1777, Gly-1778, Leu-1779, Arg-1780, and Lys-1804. Position 1851 is a phosphothreonine; by autocatalysis (Thr-1851). Residues Glu-1876 and Met-1879 each coordinate ADP. Residue His-1909 coordinates Zn(2+). Asp-1923 acts as the Proton acceptor in catalysis. Residue Asp-1933 participates in ADP binding. Residues His-1966, Cys-1968, and Cys-1972 each contribute to the Zn(2+) site. Residues 1997–2022 (EIKIESAEEPPARETGRNSPEDDMQL) form a disordered region. The span at 1998–2016 (IKIESAEEPPARETGRNSP) shows a compositional bias: basic and acidic residues.

In the C-terminal section; belongs to the protein kinase superfamily. Alpha-type protein kinase family. ALPK subfamily. The protein in the N-terminal section; belongs to the transient receptor (TC 1.A.4) family. LTrpC subfamily. TRPM6 sub-subfamily. In terms of assembly, homomers. Forms heteromers with TRPM7; TRPM6 increases the current amplitude of TRPM6/7 heteromers as compared to TRPM7 homomer. Interacts (via kinase domain) with RACK1. In terms of processing, autophosphorylated; autophosphorylation controlls the protein kinase activity of TRPM6 towards their substrates. Autophosphorylation of Thr-1851 in the kinase domain is essential for the inhibitory effect of RACK1. The C-terminus of TRPM6 is proteolytically cleaved in vivo, in a cell type-specific fashion, releasing the kinase module from the transmembrane domain. The cleaved kinase fragments are translocated to the nucleus to phosphorylate histones and regulate gene expression. As to expression, highly expressed in kidney and colon. Isoform TRPM6a and isoform TRPM6b, are coexpressed with TRPM7 in kidney, and testis, and are also found in several cell lines of lung origin. Isoform TRPM6c is detected only in testis and in NCI-H510A small cell lung carcinoma cells.

It is found in the cell membrane. It localises to the apical cell membrane. Its subcellular location is the nucleus. The enzyme catalyses L-seryl-[protein] + ATP = O-phospho-L-seryl-[protein] + ADP + H(+). It carries out the reaction L-threonyl-[protein] + ATP = O-phospho-L-threonyl-[protein] + ADP + H(+). The catalysed reaction is Mg(2+)(in) = Mg(2+)(out). It catalyses the reaction Ca(2+)(in) = Ca(2+)(out). The enzyme catalyses Zn(2+)(in) = Zn(2+)(out). Strongly inhibited by intracellular Mg(2+); unlikely to be active at physiological levels of intracellular Mg(2+). In the heteromeric TRPM6-TRPM7 channels complexes, TRPM7 are able to offset the very high sensitivity of TRPM6 to cytosolic Mg(2+) to physiologically relevant concentrations, whereas TRPM6 relieve TRPM7 from the inhibitory action of Mg-ATP. Consequently, the association of TRPM6 with TRPM7 allow for high constitutive activity of TRPM6/7 in the presence of physiological levels of Mg(2+) and Mg-ATP. The kinase activity is controlled through the autophosphorylation of a serine/threonine-rich region located to the N-terminal of the catalytic domain. Its function is as follows. Bifunctional protein that combines an ion channel with an intrinsic kinase domain, enabling it to modulate cellular functions either by conducting ions through the pore or by phosphorylating downstream proteins via its kinase domain. Crucial for Mg(2+) homeostasis. Has an important role in epithelial Mg(2+) transport and in the active Mg(2+) absorption in the gut and kidney. However, whether TRPM6 forms functional homomeric channels by itself or functions primarily as a subunit of heteromeric TRPM6-TRPM7 channels, is still under debate. Functionally, the C-terminal kinase domain can be cleaved from the channel segment in a cell-type-specific fashion. The cleaved kinase fragments can translocate to the nucleus, and bind chromatin-remodeling complex proteins to ultimately phosphorylate specific Ser/Thr residues of histones known to be functionally important for cell differentiation and development. The polypeptide is Transient receptor potential cation channel subfamily M member 6 (TRPM6) (Homo sapiens (Human)).